A 205-amino-acid chain; its full sequence is Probable 3'-5' exonuclease KapD (205 aa).

An Exonuclease domain is found at leucine 6–phenylalanine 173. Mg(2+)-binding residues include aspartate 10, glutamate 12, and aspartate 104. Catalysis depends on glutamate 12, which acts as the Proton acceptor. Glutamate 12 serves as a coordination point for AMP. Histidine 160 functions as the Proton acceptor in the catalytic mechanism. Histidine 160 lines the AMP pocket. Aspartate 165 contributes to the Mg(2+) binding site.

The cofactor is Mg(2+).

Its function is as follows. Specifically inhibits the KinA pathway to sporulation. The protein is Probable 3'-5' exonuclease KapD (kapD) of Bacillus subtilis (strain 168).